Here is a 312-residue protein sequence, read N- to C-terminus: Olfactory receptor 2H2 (312 aa).

Over 1 to 23 (MVNQSSTPGFLLLGFSEHPGLER) the chain is Extracellular. A glycan (N-linked (GlcNAc...) asparagine) is linked at Asn3. A helical transmembrane segment spans residues 24 to 47 (TLFVVVLTSYLLTLVGNTLIILLS). Topologically, residues 48 to 55 (ALDPKLHS) are cytoplasmic. Residues 56–77 (PMYFFLSNLSFLDLCFTTSCVP) form a helical membrane-spanning segment. Over 78–98 (QMLVNLWGPKKTISFLDCSVQ) the chain is Extracellular. An intrachain disulfide couples Cys95 to Cys187. The helical transmembrane segment at 99 to 118 (IFIFLSLGTTECILLTVMAF) threads the bilayer. Residues 119–137 (DRYVAVCQPLHYATIIHPR) lie on the Cytoplasmic side of the membrane. The helical transmembrane segment at 138-156 (LCWQLASVAWVIGLVESVV) threads the bilayer. Over 157–193 (QTPSTLHLPFCPDRQVDDFVCEVPALIRLSCEDTSYN) the chain is Extracellular. A helical membrane pass occupies residues 194-217 (EIQVAVASVFILVVPLSLILVSYG). The Cytoplasmic portion of the chain corresponds to 218–234 (AITWAVLRINSAKGRRK). A helical membrane pass occupies residues 235 to 257 (AFGTCSSHLTVVTLFYSSVIAVY). Over 258 to 270 (LQPKNPYAQERGK) the chain is Extracellular. Residues 271-290 (FFGLFYAVGTPSLNPLIYTL) form a helical membrane-spanning segment. Residues 291-312 (RNKEVTRAFRRLLGKEMGLTQS) lie on the Cytoplasmic side of the membrane.

The protein belongs to the G-protein coupled receptor 1 family.

The protein localises to the cell membrane. Its function is as follows. Odorant receptor. This is Olfactory receptor 2H2 (OR2H2) from Homo sapiens (Human).